An 894-amino-acid chain; its full sequence is Valine--tRNA ligase (894 aa).

A compositionally biased stretch (polar residues) spans 1-22; sequence MKSIQTPSKSHTNTKETPVMSQ. The disordered stretch occupies residues 1 to 28; that stretch reads MKSIQTPSKSHTNTKETPVMSQEETKGY. Residues 69–79 carry the 'HIGH' region motif; the sequence is PNVTGSLHIGH. Positions 554 to 558 match the 'KMSKS' region motif; that stretch reads KMSKS. Position 557 (Lys-557) interacts with ATP. Residues 832-894 adopt a coiled-coil conformation; it reads IISRLEKQQE…VKVELQGIKG (63 aa).

This sequence belongs to the class-I aminoacyl-tRNA synthetase family. ValS type 1 subfamily. Monomer.

The protein resides in the cytoplasm. The catalysed reaction is tRNA(Val) + L-valine + ATP = L-valyl-tRNA(Val) + AMP + diphosphate. Functionally, catalyzes the attachment of valine to tRNA(Val). As ValRS can inadvertently accommodate and process structurally similar amino acids such as threonine, to avoid such errors, it has a 'posttransfer' editing activity that hydrolyzes mischarged Thr-tRNA(Val) in a tRNA-dependent manner. The sequence is that of Valine--tRNA ligase from Wolinella succinogenes (strain ATCC 29543 / DSM 1740 / CCUG 13145 / JCM 31913 / LMG 7466 / NCTC 11488 / FDC 602W) (Vibrio succinogenes).